The chain runs to 198 residues: Dual specificity protein phosphatase 14 (198 aa).

In terms of domain architecture, Tyrosine-protein phosphatase spans 26 to 167; sequence GIAQITSSLF…LIDYERQLFG (142 aa). Cysteine 111 acts as the Phosphocysteine intermediate in catalysis.

Belongs to the protein-tyrosine phosphatase family. Non-receptor class dual specificity subfamily. As to quaternary structure, interacts with CD28.

It catalyses the reaction O-phospho-L-tyrosyl-[protein] + H2O = L-tyrosyl-[protein] + phosphate. It carries out the reaction O-phospho-L-seryl-[protein] + H2O = L-seryl-[protein] + phosphate. The enzyme catalyses O-phospho-L-threonyl-[protein] + H2O = L-threonyl-[protein] + phosphate. Its function is as follows. Involved in the inactivation of MAP kinases. Dephosphorylates ERK, JNK and p38 MAP-kinases. Plays a negative role in TCR signaling by dephosphorylating MAP3K7 adapter TAB1 leading to its inactivation. This is Dual specificity protein phosphatase 14 (DUSP14) from Homo sapiens (Human).